Here is a 164-residue protein sequence, read N- to C-terminus: Ribosome maturation factor RimM (164 aa).

Residues 90-161 (KGSYFIADLI…TVTIKPLEIW (72 aa)) enclose the PRC barrel domain.

It belongs to the RimM family. As to quaternary structure, binds ribosomal protein uS19.

The protein localises to the cytoplasm. Functionally, an accessory protein needed during the final step in the assembly of 30S ribosomal subunit, possibly for assembly of the head region. Essential for efficient processing of 16S rRNA. May be needed both before and after RbfA during the maturation of 16S rRNA. It has affinity for free ribosomal 30S subunits but not for 70S ribosomes. This is Ribosome maturation factor RimM from Clostridium botulinum (strain ATCC 19397 / Type A).